A 435-amino-acid polypeptide reads, in one-letter code: MTQQITVIGGGLAGCEAAWQAAKRGVKVRLFEMKPNCYSEAHHLPGLSELVCSNSLRGDSLENAVGLLKEELRRLESLFMEGAEATKVPAGGALAVDRDLFSQYITSRIESHPLIEVVREEVTRIPEEGIVVLASGPLTAGLLAQEIGRLAGSYLYFYDAIAPIVAADSIDYGKAFRASRYGKGDGDDYVNCPMDEEQYQAFVREILAAEKVEPKSFEKVVHFEGCMPIEEMASRGPETLRFGPMKPVGLVDPRVGVEPHAVIQLRQENLEATMYNLVGFQTKLTWPEQKRIFRMIPGLENAQFLRLGSMHRNTFINAPELLMATCQLKSDQRIFFAGQITGVEGYVESASSGFAVGVNAARLSKGEGLVVPPAETAIGALARHITNTEAAHFQPMNVNYGLFPPLPGRIKKKEKRGLLAQRGLEALEMWLPELS.

FAD is bound at residue 9–14; the sequence is GGGLAG.

The protein belongs to the MnmG family. TrmFO subfamily. FAD serves as cofactor.

The protein resides in the cytoplasm. The catalysed reaction is uridine(54) in tRNA + (6R)-5,10-methylene-5,6,7,8-tetrahydrofolate + NADH + H(+) = 5-methyluridine(54) in tRNA + (6S)-5,6,7,8-tetrahydrofolate + NAD(+). It carries out the reaction uridine(54) in tRNA + (6R)-5,10-methylene-5,6,7,8-tetrahydrofolate + NADPH + H(+) = 5-methyluridine(54) in tRNA + (6S)-5,6,7,8-tetrahydrofolate + NADP(+). Catalyzes the folate-dependent formation of 5-methyl-uridine at position 54 (M-5-U54) in all tRNAs. The chain is Methylenetetrahydrofolate--tRNA-(uracil-5-)-methyltransferase TrmFO from Geobacter sp. (strain M21).